The sequence spans 327 residues: Acetaldehyde dehydrogenase 6 (327 aa).

NAD(+) is bound at residue 15–18 (SGNI). C133 serves as the catalytic Acyl-thioester intermediate. NAD(+) is bound by residues 164-172 (SAGPGTRAN) and N297.

It belongs to the acetaldehyde dehydrogenase family.

The catalysed reaction is acetaldehyde + NAD(+) + CoA = acetyl-CoA + NADH + H(+). The polypeptide is Acetaldehyde dehydrogenase 6 (Rhodococcus opacus (strain B4)).